Here is a 158-residue protein sequence, read N- to C-terminus: UPF0329 protein ECU06_0050 (158 aa).

The protein belongs to the UPF0329 family.

This is UPF0329 protein ECU06_0050 from Encephalitozoon cuniculi (strain GB-M1) (Microsporidian parasite).